A 338-amino-acid polypeptide reads, in one-letter code: Tagatose 1,6-diphosphate aldolase (338 aa).

Belongs to the aldolase LacD family.

It catalyses the reaction D-tagatofuranose 1,6-bisphosphate = D-glyceraldehyde 3-phosphate + dihydroxyacetone phosphate. It participates in carbohydrate metabolism; D-tagatose 6-phosphate degradation; D-glyceraldehyde 3-phosphate and glycerone phosphate from D-tagatose 6-phosphate: step 2/2. This is Tagatose 1,6-diphosphate aldolase from Listeria monocytogenes serotype 4b (strain CLIP80459).